Reading from the N-terminus, the 216-residue chain is Elongation factor Ts (216 aa).

The involved in Mg(2+) ion dislocation from EF-Tu stretch occupies residues 81-84; that stretch reads TDFV.

Belongs to the EF-Ts family.

The protein resides in the cytoplasm. Associates with the EF-Tu.GDP complex and induces the exchange of GDP to GTP. It remains bound to the aminoacyl-tRNA.EF-Tu.GTP complex up to the GTP hydrolysis stage on the ribosome. The polypeptide is Elongation factor Ts (Geobacter sulfurreducens (strain ATCC 51573 / DSM 12127 / PCA)).